We begin with the raw amino-acid sequence, 329 residues long: Acetyl-coenzyme A carboxylase carboxyl transferase subunit alpha (329 aa).

The CoA carboxyltransferase C-terminal domain maps to 40–294; the sequence is QLETLAARRR…KTSILRHLTE (255 aa).

The protein belongs to the AccA family. In terms of assembly, acetyl-CoA carboxylase is a heterohexamer composed of biotin carboxyl carrier protein (AccB), biotin carboxylase (AccC) and two subunits each of ACCase subunit alpha (AccA) and ACCase subunit beta (AccD).

The protein localises to the cytoplasm. It carries out the reaction N(6)-carboxybiotinyl-L-lysyl-[protein] + acetyl-CoA = N(6)-biotinyl-L-lysyl-[protein] + malonyl-CoA. Its pathway is lipid metabolism; malonyl-CoA biosynthesis; malonyl-CoA from acetyl-CoA: step 1/1. Functionally, component of the acetyl coenzyme A carboxylase (ACC) complex. First, biotin carboxylase catalyzes the carboxylation of biotin on its carrier protein (BCCP) and then the CO(2) group is transferred by the carboxyltransferase to acetyl-CoA to form malonyl-CoA. In Prochlorococcus marinus (strain SARG / CCMP1375 / SS120), this protein is Acetyl-coenzyme A carboxylase carboxyl transferase subunit alpha.